We begin with the raw amino-acid sequence, 495 residues long: DNA-directed RNA polymerase subunit alpha (495 aa).

Residues 1-301 (MPYIKHIETK…RMLASLQAPP (301 aa)) are alpha N-terminal domain (alpha-NTD). 2 disordered regions span residues 159–227 (SLVP…EAPH) and 391–495 (QEQV…PEET). Residues 170–237 (PRDPLEPEND…IPSMRDDHMT (68 aa)) are insert. Residues 172–186 (DPLEPENDSKSETKS) are compositionally biased toward basic and acidic residues. Polar residues-rich tracts occupy residues 207 to 219 (VNAQ…SNST) and 391 to 403 (QEQV…SQIA). The segment at 317–495 (AKEIALTPIE…LSSSQNPEET (179 aa)) is alpha C-terminal domain (alpha-CTD). Residues 417-426 (RPIDSKETRR) are compositionally biased toward basic and acidic residues. The span at 444–453 (RKSSKTKVKA) shows a compositional bias: basic residues. Composition is skewed to polar residues over residues 464–473 (KSANLQQAEE) and 486–495 (LSSSQNPEET).

Belongs to the RNA polymerase alpha chain family. As to quaternary structure, in plastids the minimal PEP RNA polymerase catalytic core is composed of four subunits: alpha, beta, beta', and beta''. When a (nuclear-encoded) sigma factor is associated with the core the holoenzyme is formed, which can initiate transcription.

Its subcellular location is the plastid. The protein localises to the chloroplast. It carries out the reaction RNA(n) + a ribonucleoside 5'-triphosphate = RNA(n+1) + diphosphate. Its function is as follows. DNA-dependent RNA polymerase catalyzes the transcription of DNA into RNA using the four ribonucleoside triphosphates as substrates. In Nephroselmis olivacea (Green alga), this protein is DNA-directed RNA polymerase subunit alpha.